Reading from the N-terminus, the 251-residue chain is Triosephosphate isomerase (251 aa).

Residue 9–11 coordinates substrate; that stretch reads NWK. Catalysis depends on His95, which acts as the Electrophile. Glu167 (proton acceptor) is an active-site residue. Substrate is bound by residues Gly173, Ser213, and 234–235; that span reads GG. Ser213 is modified (phosphoserine).

It belongs to the triosephosphate isomerase family. In terms of assembly, homodimer.

The protein resides in the cytoplasm. It catalyses the reaction D-glyceraldehyde 3-phosphate = dihydroxyacetone phosphate. It functions in the pathway carbohydrate biosynthesis; gluconeogenesis. The protein operates within carbohydrate degradation; glycolysis; D-glyceraldehyde 3-phosphate from glycerone phosphate: step 1/1. Functionally, involved in the gluconeogenesis. Catalyzes stereospecifically the conversion of dihydroxyacetone phosphate (DHAP) to D-glyceraldehyde-3-phosphate (G3P). This is Triosephosphate isomerase from Priestia megaterium (strain DSM 319 / IMG 1521) (Bacillus megaterium).